The chain runs to 509 residues: Aldehyde dehydrogenase 1A1 (509 aa).

NAD(+) is bound by residues Ile-175–Asn-178, Lys-201–Glu-204, Gly-234–Pro-235, Gly-254–Ser-255, and Glu-277–Gly-279. The Proton acceptor role is filled by Glu-277. The Nucleophile role is filled by Cys-311. NAD(+) is bound by residues Glu-357–Lys-361 and Glu-408–Phe-410.

This sequence belongs to the aldehyde dehydrogenase family. In terms of assembly, homotetramer.

The protein resides in the cytoplasm. Its subcellular location is the cytosol. The protein localises to the cell projection. It localises to the axon. It catalyses the reaction an aldehyde + NAD(+) + H2O = a carboxylate + NADH + 2 H(+). It carries out the reaction all-trans-retinal + NAD(+) + H2O = all-trans-retinoate + NADH + 2 H(+). The catalysed reaction is 9-cis-retinal + NAD(+) + H2O = 9-cis-retinoate + NADH + 2 H(+). The enzyme catalyses 11-cis-retinal + NAD(+) + H2O = 11-cis-retinoate + NADH + 2 H(+). It catalyses the reaction 13-cis-retinal + NAD(+) + H2O = 13-cis-retinoate + NADH + 2 H(+). It carries out the reaction 3-deoxyglucosone + NAD(+) + H2O = 2-dehydro-3-deoxy-D-gluconate + NADH + 2 H(+). The catalysed reaction is (E)-4-hydroxynon-2-enal + NAD(+) + H2O = (E)-4-hydroxynon-2-enoate + NADH + 2 H(+). The enzyme catalyses malonaldehyde + NAD(+) + H2O = 3-oxopropanoate + NADH + 2 H(+). It catalyses the reaction hexanal + NAD(+) + H2O = hexanoate + NADH + 2 H(+). It carries out the reaction propanal + NAD(+) + H2O = propanoate + NADH + 2 H(+). The catalysed reaction is acetaldehyde + NAD(+) + H2O = acetate + NADH + 2 H(+). The enzyme catalyses benzaldehyde + NAD(+) + H2O = benzoate + NADH + 2 H(+). It catalyses the reaction 4-aminobutanal + NAD(+) + H2O = 4-aminobutanoate + NADH + 2 H(+). It functions in the pathway cofactor metabolism; retinol metabolism. Cytosolic dehydrogenase that catalyzes the irreversible oxidation of a wide range of aldehydes to their corresponding carboxylic acid. Functions downstream of retinol dehydrogenases and catalyzes the oxidation of retinaldehyde into retinoic acid, the second step in the oxidation of retinol/vitamin A into retinoic acid. This pathway is crucial to control the levels of retinol and retinoic acid, two important molecules which excess can be teratogenic and cytotoxic. Also oxidizes aldehydes resulting from lipid peroxidation like (E)-4-hydroxynon-2-enal/HNE, malonaldehyde and hexanal that form protein adducts and are highly cytotoxic. By participating for instance to the clearance of (E)-4-hydroxynon-2-enal/HNE in the lens epithelium prevents the formation of HNE-protein adducts and lens opacification. Also functions downstream of fructosamine-3-kinase in the fructosamine degradation pathway by catalyzing the oxidation of 3-deoxyglucosone, the carbohydrate product of fructosamine 3-phosphate decomposition, which is itself a potent glycating agent that may react with lysine and arginine side-chains of proteins. Also has an aminobutyraldehyde dehydrogenase activity and is probably part of an alternative pathway for the biosynthesis of GABA/4-aminobutanoate in midbrain, thereby playing a role in GABAergic synaptic transmission. In Gallus gallus (Chicken), this protein is Aldehyde dehydrogenase 1A1.